A 350-amino-acid chain; its full sequence is Biotin synthase (350 aa).

Positions 41-268 (NEVQISRLLS…KSRVRLSAGR (228 aa)) constitute a Radical SAM core domain. Residues C56, C60, and C63 each contribute to the [4Fe-4S] cluster site. The [2Fe-2S] cluster site is built by C100, C131, C191, and R263.

The protein belongs to the radical SAM superfamily. Biotin synthase family. As to quaternary structure, homodimer. The cofactor is [4Fe-4S] cluster. [2Fe-2S] cluster is required as a cofactor.

The enzyme catalyses (4R,5S)-dethiobiotin + (sulfur carrier)-SH + 2 reduced [2Fe-2S]-[ferredoxin] + 2 S-adenosyl-L-methionine = (sulfur carrier)-H + biotin + 2 5'-deoxyadenosine + 2 L-methionine + 2 oxidized [2Fe-2S]-[ferredoxin]. It participates in cofactor biosynthesis; biotin biosynthesis; biotin from 7,8-diaminononanoate: step 2/2. Functionally, catalyzes the conversion of dethiobiotin (DTB) to biotin by the insertion of a sulfur atom into dethiobiotin via a radical-based mechanism. The protein is Biotin synthase of Shewanella halifaxensis (strain HAW-EB4).